The chain runs to 393 residues: NAD(P)H-quinone oxidoreductase subunit H, chloroplastic (393 aa).

Belongs to the complex I 49 kDa subunit family. As to quaternary structure, NDH is composed of at least 16 different subunits, 5 of which are encoded in the nucleus.

Its subcellular location is the plastid. It is found in the chloroplast thylakoid membrane. The enzyme catalyses a plastoquinone + NADH + (n+1) H(+)(in) = a plastoquinol + NAD(+) + n H(+)(out). It carries out the reaction a plastoquinone + NADPH + (n+1) H(+)(in) = a plastoquinol + NADP(+) + n H(+)(out). In terms of biological role, NDH shuttles electrons from NAD(P)H:plastoquinone, via FMN and iron-sulfur (Fe-S) centers, to quinones in the photosynthetic chain and possibly in a chloroplast respiratory chain. The immediate electron acceptor for the enzyme in this species is believed to be plastoquinone. Couples the redox reaction to proton translocation, and thus conserves the redox energy in a proton gradient. The sequence is that of NAD(P)H-quinone oxidoreductase subunit H, chloroplastic from Hordeum vulgare (Barley).